The following is a 269-amino-acid chain: Imidazoleglycerol-phosphate dehydratase 3, chloroplastic (269 aa).

Residues 1 to 51 (MTTAPVVSPSLSRLHSAPASPFPKAPVGSGAGVAFPARPYGPSLRLRSAVM) constitute a chloroplast transit peptide. Residues Glu83, 109-117 (HMLDQLASH), 135-139 (HHSNE), Arg161, and Arg183 each bind substrate. Residues His109, His135, His136, and Glu139 each coordinate Mn(2+). The Mn(2+) site is built by His207, His231, His232, and Glu235. Substrate contacts are provided by residues 231 to 239 (HHIIEATFK) and 261 to 263 (SSK).

Belongs to the imidazoleglycerol-phosphate dehydratase family. The cofactor is Mn(2+).

The protein localises to the plastid. It localises to the chloroplast. The enzyme catalyses D-erythro-1-(imidazol-4-yl)glycerol 3-phosphate = 3-(imidazol-4-yl)-2-oxopropyl phosphate + H2O. It functions in the pathway amino-acid biosynthesis; L-histidine biosynthesis; L-histidine from 5-phospho-alpha-D-ribose 1-diphosphate: step 6/9. This Triticum aestivum (Wheat) protein is Imidazoleglycerol-phosphate dehydratase 3, chloroplastic.